The sequence spans 59 residues: Large ribosomal subunit protein uL30 (59 aa).

The protein belongs to the universal ribosomal protein uL30 family. Part of the 50S ribosomal subunit.

This chain is Large ribosomal subunit protein uL30, found in Desulforamulus reducens (strain ATCC BAA-1160 / DSM 100696 / MI-1) (Desulfotomaculum reducens).